The primary structure comprises 264 residues: Glutamate racemase (264 aa).

Residues 9 to 10 (DS) and 41 to 42 (YG) each bind substrate. Cysteine 72 functions as the Proton donor/acceptor in the catalytic mechanism. A substrate-binding site is contributed by 73–74 (NT). Cysteine 183 (proton donor/acceptor) is an active-site residue. 184-185 (TH) contacts substrate.

This sequence belongs to the aspartate/glutamate racemases family.

It carries out the reaction L-glutamate = D-glutamate. Its pathway is cell wall biogenesis; peptidoglycan biosynthesis. Its function is as follows. Provides the (R)-glutamate required for cell wall biosynthesis. In Geobacillus sp. (strain WCH70), this protein is Glutamate racemase.